The following is a 149-amino-acid chain: Alpha-crystallin A chain (149 aa).

The sHSP domain maps to 41 to 149; sequence LFRSVLESGI…DPTHSERPIP (109 aa). Zn(2+) is bound by residues H89, E91, H96, and H143.

Belongs to the small heat shock protein (HSP20) family. As to quaternary structure, heteropolymer composed of three CRYAA and one CRYAB subunits. Inter-subunit bridging via zinc ions enhances stability, which is crucial as there is no protein turn over in the lens. Can also form homodimers and homotetramers (dimers of dimers) which serve as the building blocks of homooligomers. Within homooligomers, the zinc-binding motif is created from residues of 3 different molecules. His-89 and Glu-91 from one molecule are ligands of the zinc ion, and His-96 and His-143 residues from additional molecules complete the site with tetrahedral coordination geometry.

It localises to the cytoplasm. The protein localises to the nucleus. Its function is as follows. Contributes to the transparency and refractive index of the lens. May act as a chaperone, preventing aggregation of various proteins under a wide range of stress conditions. In Anas platyrhynchos (Mallard), this protein is Alpha-crystallin A chain (CRYAA).